Reading from the N-terminus, the 131-residue chain is MSMSDPIADLLTRIRNAQMVAKTTVSVPSSKVKVAIAQVLTEEGYIDSFKVNANDGKPELEIVLKYYAGRPVIERIERVSRPGLRVYRGSDAIPQVQNGLGVAIVTTPKGVMTDRKARATGVGGEVLCYVA.

Belongs to the universal ribosomal protein uS8 family. In terms of assembly, part of the 30S ribosomal subunit. Contacts proteins S5 and S12.

Functionally, one of the primary rRNA binding proteins, it binds directly to 16S rRNA central domain where it helps coordinate assembly of the platform of the 30S subunit. This Albidiferax ferrireducens (strain ATCC BAA-621 / DSM 15236 / T118) (Rhodoferax ferrireducens) protein is Small ribosomal subunit protein uS8.